Here is a 186-residue protein sequence, read N- to C-terminus: EF-hand protein 5 (186 aa).

The segment at 1-23 is disordered; sequence MSRSKEVSPNLSQQKRGDVRSAG. EF-hand domains are found at residues 41 to 76, 77 to 112, 113 to 148, and 149 to 186; these read SAEL…GLHT, SEEE…GIDE, ASIA…SGEH, and SSAE…LNKM. Ca(2+)-binding residues include Glu-98, Asp-126, and Thr-130.

The chain is EF-hand protein 5 from Leishmania tarentolae (Sauroleishmania tarentolae).